The following is a 386-amino-acid chain: Succinate--CoA ligase [ADP-forming] subunit beta (386 aa).

An ATP-grasp domain is found at 9-244; sequence KEIFRKYGVP…LAEEEPREIQ (236 aa). Residues Lys-46, 53-55, Glu-99, Leu-102, and Glu-107 contribute to the ATP site; that span reads GRG. Mg(2+) contacts are provided by Asn-199 and Asp-213. Residues Asn-264 and 321–323 each bind substrate; that span reads GIM.

This sequence belongs to the succinate/malate CoA ligase beta subunit family. As to quaternary structure, heterotetramer of two alpha and two beta subunits. Mg(2+) serves as cofactor.

It catalyses the reaction succinate + ATP + CoA = succinyl-CoA + ADP + phosphate. The enzyme catalyses GTP + succinate + CoA = succinyl-CoA + GDP + phosphate. It participates in carbohydrate metabolism; tricarboxylic acid cycle; succinate from succinyl-CoA (ligase route): step 1/1. Its function is as follows. Succinyl-CoA synthetase functions in the citric acid cycle (TCA), coupling the hydrolysis of succinyl-CoA to the synthesis of either ATP or GTP and thus represents the only step of substrate-level phosphorylation in the TCA. The beta subunit provides nucleotide specificity of the enzyme and binds the substrate succinate, while the binding sites for coenzyme A and phosphate are found in the alpha subunit. The polypeptide is Succinate--CoA ligase [ADP-forming] subunit beta (Myxococcus xanthus (strain DK1622)).